The sequence spans 634 residues: ABC transporter B family member 29, chloroplastic (634 aa).

The transit peptide at 1 to 51 (MSFLLLTPPPCLLIPPPPLSHRRSSSLFLKHPFQPSPRPLSFCKPSALRLR) directs the protein to the chloroplast. Transmembrane regions (helical) follow at residues 75 to 95 (TVLLGWLCSCVSVVSLSQIVP), 119 to 139 (LVLAGLVLAKVVAYYLQQAFL), 195 to 215 (LLNTVVPSAIQISVMTAHMIV), 219 to 239 (ALTLVSAMVIPSVALLIAYLG), 307 to 327 (IVQVMYLGSLSIFCVGAVILA), and 330 to 350 (SLSSSAIVSFVASLAFLIDPV). An ABC transmembrane type-1 domain is found at 77–362 (LLGWLCSCVS…LGKAYNELKQ (286 aa)). In terms of domain architecture, ABC transporter spans 396–633 (VELCDISFKY…KDSLTSAGLV (238 aa)). 430–437 (GPSGGGKT) provides a ligand contact to ATP.

Belongs to the ABC transporter superfamily. ABCB family. Multidrug resistance exporter (TC 3.A.1.201) subfamily.

It localises to the plastid. It is found in the chloroplast membrane. The sequence is that of ABC transporter B family member 29, chloroplastic (ABCB29) from Arabidopsis thaliana (Mouse-ear cress).